The following is a 339-amino-acid chain: Cobalt-precorrin-5B C(1)-methyltransferase (339 aa).

This sequence belongs to the CbiD family.

The enzyme catalyses Co-precorrin-5B + S-adenosyl-L-methionine = Co-precorrin-6A + S-adenosyl-L-homocysteine. It functions in the pathway cofactor biosynthesis; adenosylcobalamin biosynthesis; cob(II)yrinate a,c-diamide from sirohydrochlorin (anaerobic route): step 6/10. Functionally, catalyzes the methylation of C-1 in cobalt-precorrin-5B to form cobalt-precorrin-6A. This is Cobalt-precorrin-5B C(1)-methyltransferase from Methanosarcina acetivorans (strain ATCC 35395 / DSM 2834 / JCM 12185 / C2A).